A 226-amino-acid polypeptide reads, in one-letter code: 7-cyano-7-deazaguanine synthase (226 aa).

Position 12 to 22 (12 to 22) interacts with ATP; the sequence is LSGGLDSATVV. 4 residues coordinate Zn(2+): cysteine 191, cysteine 201, cysteine 204, and cysteine 207.

It belongs to the QueC family. It depends on Zn(2+) as a cofactor.

It carries out the reaction 7-carboxy-7-deazaguanine + NH4(+) + ATP = 7-cyano-7-deazaguanine + ADP + phosphate + H2O + H(+). Its pathway is purine metabolism; 7-cyano-7-deazaguanine biosynthesis. In terms of biological role, catalyzes the ATP-dependent conversion of 7-carboxy-7-deazaguanine (CDG) to 7-cyano-7-deazaguanine (preQ(0)). The sequence is that of 7-cyano-7-deazaguanine synthase from Pseudomonas syringae pv. tomato (strain ATCC BAA-871 / DC3000).